The primary structure comprises 478 residues: Dynein regulatory complex subunit 4 (478 aa).

The span at methionine 1–alanine 12 shows a compositional bias: basic residues. Residues methionine 1–glutamate 33 form a disordered region. The tract at residues methionine 1–threonine 114 is regulates microtubule-binding. Residues glutamate 115 to methionine 258 are microtubule-binding. Residues leucine 242–valine 427 are a coiled coil. The tract at residues glutamine 357–threonine 478 is interaction with SMO.

It belongs to the DRC4 family. As to quaternary structure, component of the nexin-dynein regulatory complex (N-DRC). Interacts with microtubules. Interacts with SMO. Interacts (via coiled-coil domains) with RAB3B (in GTP-bound form). Interacts with DRC1. Interacts with DRC7. Expressed in respiratory epithelial cells (at protein level). Expressed in the heart, skeletal muscle, pancreas, liver, brain, trachea and lung. Weakly or not expressed in placenta and kidney.

Its subcellular location is the cytoplasm. It is found in the cytoskeleton. It localises to the cell projection. The protein resides in the cilium. The protein localises to the flagellum. Its subcellular location is the cilium axoneme. It is found in the cilium basal body. It localises to the golgi apparatus. The protein resides in the flagellum axoneme. Component of the nexin-dynein regulatory complex (N-DRC), a key regulator of ciliary/flagellar motility which maintains the alignment and integrity of the distal axoneme and regulates microtubule sliding in motile axonemes. Plays an important role in the assembly of the N-DRC linker. Plays dual roles at both the primary (or non-motile) cilia to regulate hedgehog signaling and in motile cilia to coordinate cilia movement. Required for proper motile cilia functioning. Positively regulates ciliary smoothened (SMO)-dependent Hedgehog (Hh) signaling pathway by facilitating the trafficking of SMO into the cilium and the stimulation of SMO activity in a GRK2-dependent manner. This is Dynein regulatory complex subunit 4 (GAS8) from Homo sapiens (Human).